Reading from the N-terminus, the 255-residue chain is MSTDLHWQTQGQGPDLVLLHGWGMNGAVWQQVVERLEPHFRLHVVDLPGYGHSAHLHAASLEEIAQQLLEHAPKQAIWVGWSLGGLVATHMALHHADYVSKLVTVASSPKFAAEARWRGIQPQVLSAFTEQLSEDFHITVERFMALQAMGSPSARQDVKNLKQAVFSRPQPNPQSLLAGLQMLAEVDLRDHLPHLTMPMLRLYGRLDGLVPIKVAQDLEKALPASEQFIFTQSSHAPFITEPESFCHQLLSFAGK.

The region spanning leucine 16–proline 242 is the AB hydrolase-1 domain. Residues tryptophan 22, serine 82–leucine 83, and phenylalanine 143–glutamine 147 contribute to the substrate site. The active-site Nucleophile is the serine 82. Active-site residues include aspartate 207 and histidine 235. Histidine 235 provides a ligand contact to substrate.

This sequence belongs to the AB hydrolase superfamily. Carboxylesterase BioH family. In terms of assembly, monomer.

The protein resides in the cytoplasm. The enzyme catalyses 6-carboxyhexanoyl-[ACP] methyl ester + H2O = 6-carboxyhexanoyl-[ACP] + methanol + H(+). Its pathway is cofactor biosynthesis; biotin biosynthesis. Its function is as follows. The physiological role of BioH is to remove the methyl group introduced by BioC when the pimeloyl moiety is complete. It allows to synthesize pimeloyl-ACP via the fatty acid synthetic pathway through the hydrolysis of the ester bonds of pimeloyl-ACP esters. In Vibrio vulnificus (strain YJ016), this protein is Pimeloyl-[acyl-carrier protein] methyl ester esterase.